Reading from the N-terminus, the 415-residue chain is Phosphoribosylamine--glycine ligase (415 aa).

One can recognise an ATP-grasp domain in the interval 108–311; it reads KKIMEKYNIP…LMQHIIDLDE (204 aa). ATP is bound at residue 134 to 191; that stretch reads IENCEFPVVVKKDGLAAGKGVIIADTIEAARSAIEIMYGDEEEGTVVFETFLEGEEFS. The Mg(2+) site is built by Glu-281 and Asn-283.

The protein belongs to the GARS family. The cofactor is Mg(2+). Mn(2+) serves as cofactor.

The catalysed reaction is 5-phospho-beta-D-ribosylamine + glycine + ATP = N(1)-(5-phospho-beta-D-ribosyl)glycinamide + ADP + phosphate + H(+). It functions in the pathway purine metabolism; IMP biosynthesis via de novo pathway; N(1)-(5-phospho-D-ribosyl)glycinamide from 5-phospho-alpha-D-ribose 1-diphosphate: step 2/2. The protein is Phosphoribosylamine--glycine ligase of Staphylococcus aureus (strain MRSA252).